Consider the following 589-residue polypeptide: ATP-dependent lipid A-core flippase (589 aa).

5 helical membrane passes run 29 to 49 (LLLVAALIAALIEAAGTTGFL), 70 to 90 (WLPVQIILLFVIRGAAGYITD), 157 to 177 (VIGALALMLWHSWQVTLTILV), 261 to 281 (MIGAIGLSALLFVAGAQALAG), and 283 to 303 (LTAGDFVVLMTSMLTIIPGLK). The 283-residue stretch at 32–314 (VAALIAALIE…LTNVQNMVQR (283 aa)) folds into the ABC transmembrane type-1 domain. In terms of domain architecture, ABC transporter spans 346 to 582 (IEFRDVTARY…GGLYSHLHGM (237 aa)). Residue 380 to 387 (GRSGSGKS) coordinates ATP.

This sequence belongs to the ABC transporter superfamily. Lipid exporter (TC 3.A.1.106) family. As to quaternary structure, homodimer.

It localises to the cell inner membrane. It catalyses the reaction ATP + H2O + lipid A-core oligosaccharideSide 1 = ADP + phosphate + lipid A-core oligosaccharideSide 2.. In terms of biological role, involved in lipopolysaccharide (LPS) biosynthesis. Translocates lipid A-core from the inner to the outer leaflet of the inner membrane. Transmembrane domains (TMD) form a pore in the inner membrane and the ATP-binding domain (NBD) is responsible for energy generation. This is ATP-dependent lipid A-core flippase from Xanthomonas campestris pv. campestris (strain 8004).